We begin with the raw amino-acid sequence, 150 residues long: D-aminoacyl-tRNA deacylase (150 aa).

The short motif at 136 to 137 is the Gly-cisPro motif, important for rejection of L-amino acids element; sequence GP.

Belongs to the DTD family. In terms of assembly, homodimer.

Its subcellular location is the cytoplasm. It catalyses the reaction glycyl-tRNA(Ala) + H2O = tRNA(Ala) + glycine + H(+). The catalysed reaction is a D-aminoacyl-tRNA + H2O = a tRNA + a D-alpha-amino acid + H(+). Functionally, an aminoacyl-tRNA editing enzyme that deacylates mischarged D-aminoacyl-tRNAs. Also deacylates mischarged glycyl-tRNA(Ala), protecting cells against glycine mischarging by AlaRS. Acts via tRNA-based rather than protein-based catalysis; rejects L-amino acids rather than detecting D-amino acids in the active site. By recycling D-aminoacyl-tRNA to D-amino acids and free tRNA molecules, this enzyme counteracts the toxicity associated with the formation of D-aminoacyl-tRNA entities in vivo and helps enforce protein L-homochirality. The polypeptide is D-aminoacyl-tRNA deacylase (Macrococcus caseolyticus (strain JCSC5402) (Macrococcoides caseolyticum)).